Reading from the N-terminus, the 295-residue chain is Taste receptor type 2 member 120 (295 aa).

Topologically, residues 1–5 (MDLTE) are extracellular. The chain crosses the membrane as a helical span at residues 6 to 26 (WIVTIIMMIEFLLGNCANFFI). Residues 27 to 45 (MVVNAIDCMKRRKISSADR) lie on the Cytoplasmic side of the membrane. Residues 46–66 (IITALAISRIGLLWAMLMNWH) form a helical membrane-spanning segment. Over 67-83 (SRVYTTDTYSFQVTAFS) the chain is Extracellular. The helical transmembrane segment at 84-104 (GIIWAITNHFTTWLGTILSMF) threads the bilayer. The Cytoplasmic segment spans residues 105-125 (YLFKIANFSNCLFLHLKRKLD). The helical transmembrane segment at 126–146 (SVLLVIFLVSSLLVFAYLGVV) threads the bilayer. Residues 147-177 (NIKKIAWLSVHEGNVTVKSKLMNIASIRDTL) lie on the Extracellular side of the membrane. N-linked (GlcNAc...) asparagine glycosylation occurs at N160. Residues 178-198 (LFSLINIAPFGISLTCVLLLI) traverse the membrane as a helical segment. The Cytoplasmic segment spans residues 199–230 (YSLGKHLKNMKFYGKGCQDQSTMVHIRALQTV). Residues 231 to 251 (VSFLLLYATYSSCVIISGWSI) form a helical membrane-spanning segment. Topologically, residues 252–255 (QNVP) are extracellular. Residues 256-276 (IFLFCVTIGAFYPAGHSCILI) form a helical membrane-spanning segment. Topologically, residues 277 to 295 (WGNQKLKQFLLLFLRQMKC) are cytoplasmic.

The protein belongs to the G-protein coupled receptor T2R family.

The protein resides in the membrane. Its function is as follows. Putative taste receptor which may play a role in the perception of bitterness. The protein is Taste receptor type 2 member 120 of Rattus norvegicus (Rat).